Consider the following 680-residue polypeptide: Translation factor GUF1 homolog, chloroplastic (680 aa).

Residues 1–51 (MATATASRLAVPAPRTSPQAPGRRRPAAPLPSAPPRPRALSAAPRGRVVCP) constitute a chloroplast transit peptide. The tract at residues 1–68 (MATATASRLA…ASTTDAGQDR (68 aa)) is disordered. Residues 28–37 (APLPSAPPRP) are compositionally biased toward pro residues. Over residues 38–60 (RALSAAPRGRVVCPAAPASSPAS) the composition is skewed to low complexity. The region spanning 75-256 (SNIRNFSIIA…AIVTKIPPPQ (182 aa)) is the tr-type G domain. GTP contacts are provided by residues 84–91 (AHIDHGKS), 149–153 (DTPGH), and 203–206 (NKID).

Belongs to the TRAFAC class translation factor GTPase superfamily. Classic translation factor GTPase family. LepA subfamily.

Its subcellular location is the plastid. It is found in the chloroplast. The catalysed reaction is GTP + H2O = GDP + phosphate + H(+). Promotes chloroplast protein synthesis. May act as a fidelity factor of the translation reaction, by catalyzing a one-codon backward translocation of tRNAs on improperly translocated ribosomes. This is Translation factor GUF1 homolog, chloroplastic from Oryza sativa subsp. japonica (Rice).